The sequence spans 378 residues: Cytochrome b (378 aa).

4 helical membrane-spanning segments follow: residues 33 to 53, 77 to 98, 113 to 133, and 178 to 198; these read FGSLLGACLMIQITTGLFLAM, WMIRLLHANGASMFFVCLFLHT, WNIGTILLLMTMATAFMGYVL, and FFTFHFILPFIITALATIHLL. Residues His83 and His97 each contribute to the heme b site. His182 and His196 together coordinate heme b. An a ubiquinone-binding site is contributed by His201. A run of 4 helical transmembrane segments spans residues 226–246, 288–308, 320–340, and 347–366; these read TKDIFGLTLLLLLLTSLTLFT, LGGVLALLLSIMILTIIPATH, ITQILFWTLAADLLTLTWIGG, and FEAIGQTASIAYFLIITLIP.

The protein belongs to the cytochrome b family. As to quaternary structure, the cytochrome bc1 complex contains 11 subunits: 3 respiratory subunits (MT-CYB, CYC1 and UQCRFS1), 2 core proteins (UQCRC1 and UQCRC2) and 6 low-molecular weight proteins (UQCRH/QCR6, UQCRB/QCR7, UQCRQ/QCR8, UQCR10/QCR9, UQCR11/QCR10 and a cleavage product of UQCRFS1). This cytochrome bc1 complex then forms a dimer. Heme b is required as a cofactor.

Its subcellular location is the mitochondrion inner membrane. In terms of biological role, component of the ubiquinol-cytochrome c reductase complex (complex III or cytochrome b-c1 complex) that is part of the mitochondrial respiratory chain. The b-c1 complex mediates electron transfer from ubiquinol to cytochrome c. Contributes to the generation of a proton gradient across the mitochondrial membrane that is then used for ATP synthesis. The polypeptide is Cytochrome b (MT-CYB) (Cebus albifrons (White-fronted capuchin)).